Here is a 258-residue protein sequence, read N- to C-terminus: Cell division protein ZapD (258 aa).

The protein belongs to the ZapD family. Interacts with FtsZ.

The protein resides in the cytoplasm. Functionally, cell division factor that enhances FtsZ-ring assembly. Directly interacts with FtsZ and promotes bundling of FtsZ protofilaments, with a reduction in FtsZ GTPase activity. This chain is Cell division protein ZapD, found in Coxiella burnetii (strain RSA 331 / Henzerling II).